The sequence spans 489 residues: Serine/threonine-protein kinase BSK2 (489 aa).

The segment at 1 to 30 (MGCLHSKTANLPSSDDPSAPNKPESVNGDQ) is disordered. Gly-2 is lipidated: N-myristoyl glycine. A compositionally biased stretch (polar residues) spans 7–16 (KTANLPSSDD). Residues 56 to 322 (SCIVSEGGEK…QEEVASHVLM (267 aa)) form the Protein kinase domain. ATP-binding positions include 62–70 (GGEKAPNVV) and Lys-84. The Proton acceptor role is filled by Asp-178.

Belongs to the protein kinase superfamily. Ser/Thr protein kinase family. In terms of processing, phosphorylated by BRI1 upon brassinolide (BL) treatment.

The protein resides in the cell membrane. The enzyme catalyses L-seryl-[protein] + ATP = O-phospho-L-seryl-[protein] + ADP + H(+). The catalysed reaction is L-threonyl-[protein] + ATP = O-phospho-L-threonyl-[protein] + ADP + H(+). Functionally, probable serine/threonine kinase that acts as a positive regulator of brassinosteroid (BR) signaling downstream of the receptor kinase BRI1. Mediates signal transduction from BRI1 by functioning as substrate of BRI1. The protein is Serine/threonine-protein kinase BSK2 of Arabidopsis thaliana (Mouse-ear cress).